A 209-amino-acid polypeptide reads, in one-letter code: Ribosome maturation factor RimM (209 aa).

Residues 103–178 enclose the PRC barrel domain; it reads EGATYVSDLV…RIEMVLPQGM (76 aa). The interval 184–209 is disordered; the sequence is PLSKAEKERQKSEADETREAGERRKR. A compositionally biased stretch (basic and acidic residues) spans 187–209; sequence KAEKERQKSEADETREAGERRKR.

Belongs to the RimM family. As to quaternary structure, binds ribosomal protein uS19.

Its subcellular location is the cytoplasm. Functionally, an accessory protein needed during the final step in the assembly of 30S ribosomal subunit, possibly for assembly of the head region. Essential for efficient processing of 16S rRNA. May be needed both before and after RbfA during the maturation of 16S rRNA. It has affinity for free ribosomal 30S subunits but not for 70S ribosomes. The polypeptide is Ribosome maturation factor RimM (Koribacter versatilis (strain Ellin345)).